We begin with the raw amino-acid sequence, 147 residues long: Large ribosomal subunit protein bL9 (147 aa).

It belongs to the bacterial ribosomal protein bL9 family.

Its function is as follows. Binds to the 23S rRNA. The sequence is that of Large ribosomal subunit protein bL9 from Geobacter sp. (strain M21).